Here is a 210-residue protein sequence, read N- to C-terminus: Protein-methionine-sulfoxide reductase heme-binding subunit MsrQ (210 aa).

6 consecutive transmembrane segments (helical) span residues 8–28 (LAVFLAACVAPVWWLYQAWIF), 37–57 (VLVEDFGLATLVMLLITMSMT), 75–95 (LGLWCFAYVVLHMTMYALFIL), 110–130 (PYIIVGALAFLGLLALAVTSN), 147–167 (LIYVILGLGLLHMFWIVRADL), and 169–189 (EWALYAGIGAFLLLLRIPMIT).

Belongs to the MsrQ family. As to quaternary structure, heterodimer of a catalytic subunit (MsrP) and a heme-binding subunit (MsrQ). It depends on FMN as a cofactor. Heme b is required as a cofactor.

Its subcellular location is the cell inner membrane. Its function is as follows. Part of the MsrPQ system that repairs oxidized periplasmic proteins containing methionine sulfoxide residues (Met-O), using respiratory chain electrons. Thus protects these proteins from oxidative-stress damage caused by reactive species of oxygen and chlorine generated by the host defense mechanisms. MsrPQ is essential for the maintenance of envelope integrity under bleach stress, rescuing a wide series of structurally unrelated periplasmic proteins from methionine oxidation. MsrQ provides electrons for reduction to the reductase catalytic subunit MsrP, using the quinone pool of the respiratory chain. This Pseudomonas savastanoi pv. phaseolicola (strain 1448A / Race 6) (Pseudomonas syringae pv. phaseolicola (strain 1448A / Race 6)) protein is Protein-methionine-sulfoxide reductase heme-binding subunit MsrQ.